The following is a 137-amino-acid chain: Thionin BTH7 (137 aa).

The first 28 residues, 1-28 (MATNKSIKSVVICVLILGLVLEQVQVEG), serve as a signal peptide directing secretion. 4 cysteine pairs are disulfide-bonded: C31-C68, C32-C60, C40-C58, and C44-C54. Residues 75–137 (LNLLPESGEP…DGEVIQSVEA (63 aa)) constitute a propeptide, acidic domain.

It belongs to the plant thionin (TC 1.C.44) family. 4 C-C subfamily.

It localises to the secreted. Functionally, thionins are small plant proteins which are toxic to animal cells. They seem to exert their toxic effect at the level of the cell membrane. Their precise function is not known. The sequence is that of Thionin BTH7 from Hordeum vulgare (Barley).